A 691-amino-acid chain; its full sequence is Elongation factor G (691 aa).

One can recognise a tr-type G domain in the interval 12–286; sequence NKLRNIGIMA…GIVRYLPSPL (275 aa). Residues 21 to 28, 85 to 89, and 139 to 142 contribute to the GTP site; these read AHIDAGKT, DTPGH, and NKMD.

The protein belongs to the TRAFAC class translation factor GTPase superfamily. Classic translation factor GTPase family. EF-G/EF-2 subfamily.

It localises to the cytoplasm. Its function is as follows. Catalyzes the GTP-dependent ribosomal translocation step during translation elongation. During this step, the ribosome changes from the pre-translocational (PRE) to the post-translocational (POST) state as the newly formed A-site-bound peptidyl-tRNA and P-site-bound deacylated tRNA move to the P and E sites, respectively. Catalyzes the coordinated movement of the two tRNA molecules, the mRNA and conformational changes in the ribosome. The protein is Elongation factor G of Fervidobacterium nodosum (strain ATCC 35602 / DSM 5306 / Rt17-B1).